The chain runs to 364 residues: DNA replication and repair protein RecF (364 aa).

ATP is bound at residue 30–37 (GNNAQGKT).

The protein belongs to the RecF family.

The protein localises to the cytoplasm. Functionally, the RecF protein is involved in DNA metabolism; it is required for DNA replication and normal SOS inducibility. RecF binds preferentially to single-stranded, linear DNA. It also seems to bind ATP. The polypeptide is DNA replication and repair protein RecF (Clostridium botulinum (strain Langeland / NCTC 10281 / Type F)).